Here is a 327-residue protein sequence, read N- to C-terminus: MEELLIENSQRFTIFPIQHPECWNWYKKLESLTWTAQEVDMCKDIDDWEAMPKPQREFYKQILAFFVVADEIVIENLLTNFMREIKVKEVLYFYTMQAAQECVHSEAYSIQVKTLIPDEKEQQRIFSGIEKHPIIKKMAQWVRQWMDPTKNSLGERLVGFAAVEGILFQNHFVAIQFLKEQNIMPGLVSYNEFISRDEGVHCSFACFLISNYVYNIPEEKIIHKILKEAVELVDEFISYAFDKARGRVPGFSKEMLFQYIRYFTDNLCFMMQCKSIYKVGNPFPQMTKFFLNEVEKTNFFELRPTQYQNCVKDDAFAFKLFLNDDDF.

Residues aspartate 70, glutamate 101, and histidine 104 each contribute to the Fe cation site. The active site involves tyrosine 108. Residues glutamate 164, glutamate 198, and histidine 201 each contribute to the Fe cation site.

The protein belongs to the ribonucleoside diphosphate reductase small chain family. Heterotetramer composed of a homodimer of the large subunit (R1) and a homodimer of the small subunit (R2). Larger multisubunit protein complex are also active, composed of (R1)n(R2)n. Fe cation is required as a cofactor.

It carries out the reaction a 2'-deoxyribonucleoside 5'-diphosphate + [thioredoxin]-disulfide + H2O = a ribonucleoside 5'-diphosphate + [thioredoxin]-dithiol. Ribonucleoside-diphosphate reductase holoenzyme provides the precursors necessary for viral DNA synthesis. Allows virus growth in non-dividing cells. Catalyzes the biosynthesis of deoxyribonucleotides from the corresponding ribonucleotides. This is Ribonucleoside-diphosphate reductase small chain from Ornithodoros (relapsing fever ticks).